We begin with the raw amino-acid sequence, 180 residues long: uncharacterized protein (180 aa).

Positions 1-180 (MVEFEIVKGD…KDYERALRAV (180 aa)) constitute a Macro domain.

This is an uncharacterized protein from Thermococcus kodakarensis (strain ATCC BAA-918 / JCM 12380 / KOD1) (Pyrococcus kodakaraensis (strain KOD1)).